Here is a 173-residue protein sequence, read N- to C-terminus: RNA polymerase sigma factor YlaC (173 aa).

This sequence belongs to the sigma-70 factor family. ECF subfamily.

Functionally, sigma factors are initiation factors that promote the attachment of RNA polymerase to specific initiation sites and are then released. This sigma factor contributes to oxidative stress resistance. This is RNA polymerase sigma factor YlaC (ylaC) from Bacillus subtilis (strain 168).